A 739-amino-acid polypeptide reads, in one-letter code: uncharacterized protein (739 aa).

8 helical membrane passes run 53–73 (LALGIALWMELGSPQWAALTV), 90–110 (WHLFGMVVGVISGITLVAAIP), 114–134 (LMFILLLAVGIGTFCMIGTFM), 178–198 (TYILLGIVLEASISGLFQLGL), 421–441 (LIWICTAWPSGLTFIMFVCIV), 457–477 (AFLRGACCAVVAAGILNLALM), 491–511 (GLAMMIGGLAFAYPPLTLPAV), and 532–552 (IVYFNTALPLVLGLLYASWMY).

The protein belongs to the aromatic acid exporter ArAE (TC 2.A.85) family.

It is found in the cell membrane. This is an uncharacterized protein from Gluconobacter oxydans (strain 621H) (Gluconobacter suboxydans).